The sequence spans 382 residues: Lipid-A-disaccharide synthase (382 aa).

The protein belongs to the LpxB family.

The enzyme catalyses 2-N,3-O-bis[(3R)-3-hydroxytetradecanoyl]-alpha-D-glucosaminyl 1-phosphate + UDP-2-N,3-O-bis[(3R)-3-hydroxytetradecanoyl]-alpha-D-glucosamine = lipid A disaccharide (E. coli) + UDP + H(+). It catalyses the reaction a lipid X + a UDP-2-N,3-O-bis[(3R)-3-hydroxyacyl]-alpha-D-glucosamine = a lipid A disaccharide + UDP + H(+). It participates in glycolipid biosynthesis; lipid IV(A) biosynthesis; lipid IV(A) from (3R)-3-hydroxytetradecanoyl-[acyl-carrier-protein] and UDP-N-acetyl-alpha-D-glucosamine: step 5/6. Its function is as follows. Condensation of UDP-2,3-diacylglucosamine and 2,3-diacylglucosamine-1-phosphate to form lipid A disaccharide, a precursor of lipid A, a phosphorylated glycolipid that anchors the lipopolysaccharide to the outer membrane of the cell. In Salmonella heidelberg (strain SL476), this protein is Lipid-A-disaccharide synthase.